Consider the following 198-residue polypeptide: Pyridoxal 5'-phosphate synthase subunit PdxT (198 aa).

Residue 52–54 participates in L-glutamine binding; sequence GES. The active-site Nucleophile is the Cys84. Residues Arg115 and 142-143 each bind L-glutamine; that span reads IR. Residues His178 and Glu180 each act as charge relay system in the active site.

Belongs to the glutaminase PdxT/SNO family. As to quaternary structure, in the presence of PdxS, forms a dodecamer of heterodimers. Only shows activity in the heterodimer.

The catalysed reaction is aldehydo-D-ribose 5-phosphate + D-glyceraldehyde 3-phosphate + L-glutamine = pyridoxal 5'-phosphate + L-glutamate + phosphate + 3 H2O + H(+). The enzyme catalyses L-glutamine + H2O = L-glutamate + NH4(+). It functions in the pathway cofactor biosynthesis; pyridoxal 5'-phosphate biosynthesis. In terms of biological role, catalyzes the hydrolysis of glutamine to glutamate and ammonia as part of the biosynthesis of pyridoxal 5'-phosphate. The resulting ammonia molecule is channeled to the active site of PdxS. This chain is Pyridoxal 5'-phosphate synthase subunit PdxT, found in Archaeoglobus fulgidus (strain ATCC 49558 / DSM 4304 / JCM 9628 / NBRC 100126 / VC-16).